The sequence spans 305 residues: Mitochondrial uncoupling protein 2 (305 aa).

3 Solcar repeats span residues 10-104, 114-205, and 214-297; these read ISFL…VKTL, IPLY…IKET, and DSVL…VKKV. Helical transmembrane passes span 16–36, 73–93, 120–140, 179–199, 220–240, and 270–290; these read FICS…LDTA, ISGL…YGGL, ILAA…TDLV, TGLG…LASY, LLAG…IDVV, and YKGF…MFLT.

Belongs to the mitochondrial carrier (TC 2.A.29) family.

Its subcellular location is the mitochondrion inner membrane. PUMPS are mitochondrial transporter proteins that create proton leaks across the inner mitochondrial membrane, thus uncoupling oxidative phosphorylation. This leads to a decrease in the efficiency of oxidative phosphorylation and an increase in heat production. May be involved in protecting plant cells against oxidative stress damage. This Arabidopsis thaliana (Mouse-ear cress) protein is Mitochondrial uncoupling protein 2 (PUMP2).